The primary structure comprises 155 residues: Ribosome maturation factor RimP (155 aa).

It belongs to the RimP family.

It is found in the cytoplasm. In terms of biological role, required for maturation of 30S ribosomal subunits. The polypeptide is Ribosome maturation factor RimP (Staphylococcus aureus (strain JH9)).